Reading from the N-terminus, the 113-residue chain is Large ribosomal subunit protein uL24 (113 aa).

The protein belongs to the universal ribosomal protein uL24 family. As to quaternary structure, part of the 50S ribosomal subunit.

In terms of biological role, one of two assembly initiator proteins, it binds directly to the 5'-end of the 23S rRNA, where it nucleates assembly of the 50S subunit. One of the proteins that surrounds the polypeptide exit tunnel on the outside of the subunit. The chain is Large ribosomal subunit protein uL24 from Rickettsia typhi (strain ATCC VR-144 / Wilmington).